We begin with the raw amino-acid sequence, 369 residues long: Queuine tRNA-ribosyltransferase (369 aa).

The Proton acceptor role is filled by Asp-89. Residues 89–93 (DSGGF), Asp-142, Gln-184, and Gly-211 each bind substrate. The tract at residues 242–248 (GGGSPEL) is RNA binding. Asp-261 acts as the Nucleophile in catalysis. The interval 266–270 (TRIAR) is RNA binding; important for wobble base 34 recognition. Zn(2+)-binding residues include Cys-299, Cys-301, Cys-304, and His-330.

The protein belongs to the queuine tRNA-ribosyltransferase family. In terms of assembly, homodimer. Within each dimer, one monomer is responsible for RNA recognition and catalysis, while the other monomer binds to the replacement base PreQ1. The cofactor is Zn(2+).

The enzyme catalyses 7-aminomethyl-7-carbaguanine + guanosine(34) in tRNA = 7-aminomethyl-7-carbaguanosine(34) in tRNA + guanine. Its pathway is tRNA modification; tRNA-queuosine biosynthesis. Its function is as follows. Catalyzes the base-exchange of a guanine (G) residue with the queuine precursor 7-aminomethyl-7-deazaguanine (PreQ1) at position 34 (anticodon wobble position) in tRNAs with GU(N) anticodons (tRNA-Asp, -Asn, -His and -Tyr). Catalysis occurs through a double-displacement mechanism. The nucleophile active site attacks the C1' of nucleotide 34 to detach the guanine base from the RNA, forming a covalent enzyme-RNA intermediate. The proton acceptor active site deprotonates the incoming PreQ1, allowing a nucleophilic attack on the C1' of the ribose to form the product. After dissociation, two additional enzymatic reactions on the tRNA convert PreQ1 to queuine (Q), resulting in the hypermodified nucleoside queuosine (7-(((4,5-cis-dihydroxy-2-cyclopenten-1-yl)amino)methyl)-7-deazaguanosine). The polypeptide is Queuine tRNA-ribosyltransferase (Thermotoga neapolitana (strain ATCC 49049 / DSM 4359 / NBRC 107923 / NS-E)).